Reading from the N-terminus, the 375-residue chain is Phosphoglucan phosphatase DSP4, amyloplastic (375 aa).

The N-terminal 42 residues, 1 to 42 (MFCVQNLPRSSALPLQSFKSHQRRPPCSVNTLGVMSNVNLHR), are a transit peptide targeting the amyloplast. Residues 49–71 (ISGPTSSAETSDANVEEEKSETY) form a disordered region. The span at 51–61 (GPTSSAETSDA) shows a compositional bias: polar residues. The Tyrosine-protein phosphatase domain maps to 92–249 (NYNFIRPDLI…AADILTGLRK (158 aa)). Cys-193 acts as the Phosphocysteine intermediate in catalysis. 194–199 (TAGLGR) contacts substrate. Positions 254–330 (LTWKNPDCTT…NKDGHVNNFV (77 aa)) are polysaccharide binding.

As to expression, expressed in phloem parenchyma of 16-24 week old seedlings and 2 year old trees (at protein level). Expressed in leaves of 16-24 week old seedlings and 2 year old trees.

It localises to the plastid. The protein resides in the amyloplast. The protein localises to the nucleus. Its function is as follows. Starch granule-associated phosphoglucan phosphatase involved in the control of starch accumulation. Acts as a major regulator of the initial steps of starch degradation at the granule surface. Functions during the day by dephosphorylating the night-accumulated phospho-oligosaccharides. Can release phosphate from both the C6 and the C3 positions. In Castanea sativa (Sweet chestnut), this protein is Phosphoglucan phosphatase DSP4, amyloplastic.